The sequence spans 285 residues: Polyamine aminopropyltransferase (285 aa).

Positions 2-237 (EFWFSELHSP…GYWLFGFASK (236 aa)) constitute a PABS domain. Gln-31 contributes to the S-methyl-5'-thioadenosine binding site. Asp-86 lines the spermidine pocket. S-methyl-5'-thioadenosine-binding positions include Glu-106 and 137–138 (DA). The active-site Proton acceptor is Asp-155.

The protein belongs to the spermidine/spermine synthase family. As to quaternary structure, homodimer or homotetramer.

The protein resides in the cytoplasm. It catalyses the reaction S-adenosyl 3-(methylsulfanyl)propylamine + putrescine = S-methyl-5'-thioadenosine + spermidine + H(+). The protein operates within amine and polyamine biosynthesis; spermidine biosynthesis; spermidine from putrescine: step 1/1. Its function is as follows. Catalyzes the irreversible transfer of a propylamine group from the amino donor S-adenosylmethioninamine (decarboxy-AdoMet) to putrescine (1,4-diaminobutane) to yield spermidine. This is Polyamine aminopropyltransferase from Lachnospira eligens (strain ATCC 27750 / DSM 3376 / VPI C15-48 / C15-B4) (Eubacterium eligens).